We begin with the raw amino-acid sequence, 39 residues long: Contryphan-Cal1 (39 aa).

Residues 1-20 (MTRTAVLLLTLLFLVAMAAS) form the signal peptide. Cys-29 and Cys-35 are oxidised to a cystine.

Expressed by the venom duct.

The protein localises to the secreted. Probable neurotoxin. In Californiconus californicus (California cone), this protein is Contryphan-Cal1.